The sequence spans 734 residues: Photosystem I P700 chlorophyll a apoprotein A2 (734 aa).

8 helical membrane-spanning segments follow: residues Ile-46–Ala-69, Leu-135–Gln-158, Leu-175–Ile-199, Met-273–Tyr-291, Leu-330–Tyr-353, Ala-369–Ile-395, Ala-417–His-439, and Phe-517–Val-535. Positions 559 and 568 each coordinate [4Fe-4S] cluster. 2 consecutive transmembrane segments (helical) span residues Ala-575–Trp-596 and Leu-643–Ile-665. Positions 654, 662, and 670 each coordinate chlorophyll a. Trp-671 contributes to the phylloquinone binding site. The chain crosses the membrane as a helical span at residues Leu-707–Ala-727.

The protein belongs to the PsaA/PsaB family. In terms of assembly, the PsaA/B heterodimer binds the P700 chlorophyll special pair and subsequent electron acceptors. PSI consists of a core antenna complex that captures photons, and an electron transfer chain that converts photonic excitation into a charge separation. The eukaryotic PSI reaction center is composed of at least 11 subunits. P700 is a chlorophyll a/chlorophyll a' dimer, A0 is one or more chlorophyll a, A1 is one or both phylloquinones and FX is a shared 4Fe-4S iron-sulfur center. is required as a cofactor.

The protein resides in the plastid. The protein localises to the chloroplast thylakoid membrane. It catalyses the reaction reduced [plastocyanin] + hnu + oxidized [2Fe-2S]-[ferredoxin] = oxidized [plastocyanin] + reduced [2Fe-2S]-[ferredoxin]. PsaA and PsaB bind P700, the primary electron donor of photosystem I (PSI), as well as the electron acceptors A0, A1 and FX. PSI is a plastocyanin-ferredoxin oxidoreductase, converting photonic excitation into a charge separation, which transfers an electron from the donor P700 chlorophyll pair to the spectroscopically characterized acceptors A0, A1, FX, FA and FB in turn. Oxidized P700 is reduced on the lumenal side of the thylakoid membrane by plastocyanin. This chain is Photosystem I P700 chlorophyll a apoprotein A2, found in Spinacia oleracea (Spinach).